The chain runs to 408 residues: tRNA(Ile)-lysidine synthase (408 aa).

27–32 (SGGGDS) contributes to the ATP binding site.

The protein belongs to the tRNA(Ile)-lysidine synthase family.

The protein localises to the cytoplasm. The enzyme catalyses cytidine(34) in tRNA(Ile2) + L-lysine + ATP = lysidine(34) in tRNA(Ile2) + AMP + diphosphate + H(+). Ligates lysine onto the cytidine present at position 34 of the AUA codon-specific tRNA(Ile) that contains the anticodon CAU, in an ATP-dependent manner. Cytidine is converted to lysidine, thus changing the amino acid specificity of the tRNA from methionine to isoleucine. In Caulobacter vibrioides (strain ATCC 19089 / CIP 103742 / CB 15) (Caulobacter crescentus), this protein is tRNA(Ile)-lysidine synthase.